We begin with the raw amino-acid sequence, 208 residues long: Holliday junction resolvase RecU (208 aa).

The Mg(2+) site is built by threonine 86, aspartate 88, glutamate 101, and glutamine 120.

Belongs to the RecU family. Requires Mg(2+) as cofactor.

Its subcellular location is the cytoplasm. It carries out the reaction Endonucleolytic cleavage at a junction such as a reciprocal single-stranded crossover between two homologous DNA duplexes (Holliday junction).. In terms of biological role, endonuclease that resolves Holliday junction intermediates in genetic recombination. Cleaves mobile four-strand junctions by introducing symmetrical nicks in paired strands. Promotes annealing of linear ssDNA with homologous dsDNA. Required for DNA repair, homologous recombination and chromosome segregation. The sequence is that of Holliday junction resolvase RecU from Lacticaseibacillus casei (strain BL23) (Lactobacillus casei).